We begin with the raw amino-acid sequence, 270 residues long: Pyrroline-5-carboxylate reductase (270 aa).

Belongs to the pyrroline-5-carboxylate reductase family.

The protein resides in the cytoplasm. The catalysed reaction is L-proline + NADP(+) = (S)-1-pyrroline-5-carboxylate + NADPH + 2 H(+). It carries out the reaction L-proline + NAD(+) = (S)-1-pyrroline-5-carboxylate + NADH + 2 H(+). The protein operates within amino-acid biosynthesis; L-proline biosynthesis; L-proline from L-glutamate 5-semialdehyde: step 1/1. Its function is as follows. Catalyzes the reduction of 1-pyrroline-5-carboxylate (PCA) to L-proline. This is Pyrroline-5-carboxylate reductase from Methanosarcina acetivorans (strain ATCC 35395 / DSM 2834 / JCM 12185 / C2A).